The primary structure comprises 163 residues: Methyl-CpG-binding domain-containing protein 3 (163 aa).

The segment at 6 to 56 (TTLIDSYAAQCWKCLKVRSIESQEDYEEIRSKTLEKFFECKRCEEPGDMVM) adopts a CW-type zinc-finger fold. The 73-residue stretch at 65–137 (WFQDEHSIPK…EEVSFAAPKR (73 aa)) folds into the MBD domain. Positions 140-163 (LKKKPVDSHSSSRNTEEDGVSRDA) are disordered. Residues 153 to 163 (NTEEDGVSRDA) are compositionally biased toward basic and acidic residues.

The protein localises to the nucleus. Functionally, probable transcriptional regulator. In Arabidopsis thaliana (Mouse-ear cress), this protein is Methyl-CpG-binding domain-containing protein 3 (MBD3).